The following is a 353-amino-acid chain: Phenol 2-monooxygenase, reductase component DmpP (353 aa).

The 2Fe-2S ferredoxin-type domain occupies 3-93 (YNVTIEPTGE…DLVIEADVDA (91 aa)). [2Fe-2S] cluster-binding residues include cysteine 37, cysteine 42, cysteine 45, and cysteine 77. Residues 102–201 (VEDYRGVVSA…SGPYGQFFVR (100 aa)) form the FAD-binding FR-type domain.

As to quaternary structure, the multicomponent enzyme phenol hydroxylase is formed by DmpL (P1 component), DmpM (P2 component), DmpN (P3 component), DmpO (P4 component) and DmpP (P5 component). FAD is required as a cofactor. Requires [2Fe-2S] cluster as cofactor.

It catalyses the reaction phenol + NADH + O2 + H(+) = catechol + NAD(+) + H2O. It functions in the pathway aromatic compound metabolism; phenol degradation. Part of a multicomponent enzyme which catalyzes the degradation of phenol and some of its methylated derivatives. DmpP probably transfers electrons from NADH, via FAD and the iron-sulfur center, to the oxygenase component of the complex. Required for growth on phenol and for in vitro phenol hydroxylase activity. The sequence is that of Phenol 2-monooxygenase, reductase component DmpP from Pseudomonas sp. (strain CF600).